We begin with the raw amino-acid sequence, 565 residues long: DNA-dependent metalloprotease SPRTN (565 aa).

Residues 23–130 (RALFLEFNDT…RTGANISVYH (108 aa)) form the SprT-like domain. His-88 is a binding site for Zn(2+). Residue Glu-89 is part of the active site. His-92 and His-107 together coordinate Zn(2+). A disordered region spans residues 191–219 (EPENYPQKRKRKNDPTISEVNSSSHVKGK). A compositionally biased stretch (polar residues) spans 205 to 215 (PTISEVNSSSH). The SHP-box motif lies at 231–239 (FSGTGYKLF). The short motif at 288-295 (STPAQSIL) is the PIP-box element. Residues 349-389 (TLPSPSIQSTSQKPQKDISFGFTLPSQSFPSTSPGSNSENK) are disordered. Polar residues-rich tracts occupy residues 351 to 361 (PSPSIQSTSQK) and 372 to 386 (LPSQ…GSNS). The UBZ4-type 1 zinc-finger motif lies at 436–463 (KVSCPVCGTEVLECKINDHLDTCTSSGP). Positions 439, 442, 454, and 458 each coordinate Zn(2+). The Nuclear localization signal signature appears at 476–499 (QSFPSTSQGSNSAIKEPLYKKLQI). Residues 537–564 (KVCCPVCGTDVLQDKINDHLDTCLQNCN) form a UBZ4-type 2 zinc finger. Residues Cys-540, Cys-543, His-555, and Cys-559 each coordinate Zn(2+).

It belongs to the Spartan family. As to quaternary structure, homodimer. Zn(2+) is required as a cofactor. In terms of processing, autocatalytically cleaved in response to double-stranded DNA-binding: autocatalytic cleavage takes place in trans and leads to inactivation.

It is found in the nucleus. It localises to the chromosome. Its activity is regulated as follows. DNA-binding activates the protease activity: single-stranded DNA-binding specifically activates ability to cleave covalent DNA-protein cross-links (DPCs). In contrast, double-stranded DNA-binding specifically activates autocatalytic cleavage, and subsequent inactivation. In terms of biological role, DNA-dependent metalloendopeptidase that mediates the proteolytic cleavage of covalent DNA-protein cross-links (DPCs) during DNA synthesis, thereby playing a key role in maintaining genomic integrity. DPCs are highly toxic DNA lesions that interfere with essential chromatin transactions, such as replication and transcription, and which are induced by reactive agents, such as UV light or formaldehyde. Associates with the DNA replication machinery and specifically removes DPCs during DNA synthesis. Catalyzes proteolytic cleavage of the hmces DNA-protein cross-link following unfolding by the brip1/fancj helicase. Acts as a pleiotropic protease for DNA-binding proteins cross-linked with DNA, such as top1, top2a, histones H3 and H4. Mediates degradation of DPCs that are not ubiquitinated, while it is not able to degrade ubiquitinated DPCs. SPRTN activation requires polymerase collision with DPCs followed by helicase bypass of DPCs. May also act as a 'reader' of ubiquitinated pcna: facilitates chromatin association of rad18 and is required for efficient pcna monoubiquitination, promoting a feed-forward loop to enhance pcna ubiquitination and translesion DNA synthesis. Acts as a regulator of translesion DNA synthesis by recruiting vcp/p97 to sites of DNA damage. In Xenopus laevis (African clawed frog), this protein is DNA-dependent metalloprotease SPRTN.